A 373-amino-acid chain; its full sequence is UDP-3-O-acylglucosamine N-acyltransferase 2 (373 aa).

The Proton acceptor role is filled by H257. The segment at 346 to 373 (DGRTAASAEAAAPSSDATGVDQPDQAAS) is disordered. Low complexity predominate over residues 350–362 (AASAEAAAPSSDA).

Belongs to the transferase hexapeptide repeat family. LpxD subfamily. As to quaternary structure, homotrimer.

It catalyses the reaction a UDP-3-O-[(3R)-3-hydroxyacyl]-alpha-D-glucosamine + a (3R)-hydroxyacyl-[ACP] = a UDP-2-N,3-O-bis[(3R)-3-hydroxyacyl]-alpha-D-glucosamine + holo-[ACP] + H(+). The protein operates within bacterial outer membrane biogenesis; LPS lipid A biosynthesis. Its function is as follows. Catalyzes the N-acylation of UDP-3-O-acylglucosamine using 3-hydroxyacyl-ACP as the acyl donor. Is involved in the biosynthesis of lipid A, a phosphorylated glycolipid that anchors the lipopolysaccharide to the outer membrane of the cell. The polypeptide is UDP-3-O-acylglucosamine N-acyltransferase 2 (Rhodopseudomonas palustris (strain BisB18)).